A 167-amino-acid polypeptide reads, in one-letter code: Lipoprotein signal peptidase (167 aa).

A run of 4 helical transmembrane segments spans residues 5-25, 42-62, 70-90, and 102-122; these read ICST…LDLG, LIPY…SFLA, WFFA…MYRA, and ALII…GFVI. Catalysis depends on residues D123 and D141. Residues 137-157 traverse the membrane as a helical segment; sequence FNIADMAICIGAGLVIIDSFL.

Belongs to the peptidase A8 family.

It is found in the cell inner membrane. The catalysed reaction is Release of signal peptides from bacterial membrane prolipoproteins. Hydrolyzes -Xaa-Yaa-Zaa-|-(S,diacylglyceryl)Cys-, in which Xaa is hydrophobic (preferably Leu), and Yaa (Ala or Ser) and Zaa (Gly or Ala) have small, neutral side chains.. It functions in the pathway protein modification; lipoprotein biosynthesis (signal peptide cleavage). Its function is as follows. This protein specifically catalyzes the removal of signal peptides from prolipoproteins. The polypeptide is Lipoprotein signal peptidase (Photorhabdus laumondii subsp. laumondii (strain DSM 15139 / CIP 105565 / TT01) (Photorhabdus luminescens subsp. laumondii)).